The primary structure comprises 347 residues: NADH-quinone oxidoreductase subunit H (347 aa).

Transmembrane regions (helical) follow at residues 21–41 (VAGI…IIYA), 87–107 (GLFL…WAVI), 118–138 (INVG…GVIL), 157–177 (AQMI…VLFA), 195–215 (GIVN…MFLI), 258–278 (NVLL…LPPI), 283–303 (LYAV…FFVF), and 323–343 (WKIF…YLML).

It belongs to the complex I subunit 1 family. NDH-1 is composed of 14 different subunits. Subunits NuoA, H, J, K, L, M, N constitute the membrane sector of the complex.

The protein localises to the cell inner membrane. The enzyme catalyses a quinone + NADH + 5 H(+)(in) = a quinol + NAD(+) + 4 H(+)(out). In terms of biological role, NDH-1 shuttles electrons from NADH, via FMN and iron-sulfur (Fe-S) centers, to quinones in the respiratory chain. The immediate electron acceptor for the enzyme in this species is believed to be ubiquinone. Couples the redox reaction to proton translocation (for every two electrons transferred, four hydrogen ions are translocated across the cytoplasmic membrane), and thus conserves the redox energy in a proton gradient. This subunit may bind ubiquinone. In Sphingopyxis alaskensis (strain DSM 13593 / LMG 18877 / RB2256) (Sphingomonas alaskensis), this protein is NADH-quinone oxidoreductase subunit H.